The sequence spans 297 residues: MLTYQAFIQSPGDTFLNLGFLTIRWYGLLISISVVIGLFISKKLAKSRNINPQYISDILPSLIISSIIGARAYYVIFEWRQYSGSNFFTSFNLFNNVIQIPSFIAIWQGGIAIHGGLIGGFLCILYFCKSKNIHLKTFIDILIPSIILGQSIGRWGNFFNNEAFGIPTDLPWKLFVPIQNRPIEFINYQFFHPTFIYESLWNFLIFILLITIFYKQNNKNSVRPGFISCLYLIGYSFGRFWIEGLRTDPLCIGGLPPFCDGGLRMAQFISIFLFSSGLIGLFFLRLKSYKNKTRNNG.

4 helical membrane passes run 20–40 (FLTI…GLFI), 58–78 (ILPS…VIFE), 104–124 (IAIW…FLCI), and 133–153 (IHLK…QSIG). An a 1,2-diacyl-sn-glycero-3-phospho-(1'-sn-glycerol)-binding site is contributed by Arg154. 3 helical membrane-spanning segments follow: residues 194–214 (TFIY…TIFY), 225–245 (GFIS…IEGL), and 266–286 (AQFI…FLRL).

Belongs to the Lgt family.

The protein resides in the cell inner membrane. The catalysed reaction is L-cysteinyl-[prolipoprotein] + a 1,2-diacyl-sn-glycero-3-phospho-(1'-sn-glycerol) = an S-1,2-diacyl-sn-glyceryl-L-cysteinyl-[prolipoprotein] + sn-glycerol 1-phosphate + H(+). The protein operates within protein modification; lipoprotein biosynthesis (diacylglyceryl transfer). Its function is as follows. Catalyzes the transfer of the diacylglyceryl group from phosphatidylglycerol to the sulfhydryl group of the N-terminal cysteine of a prolipoprotein, the first step in the formation of mature lipoproteins. In Prochlorococcus marinus subsp. pastoris (strain CCMP1986 / NIES-2087 / MED4), this protein is Phosphatidylglycerol--prolipoprotein diacylglyceryl transferase.